The chain runs to 512 residues: NAD-dependent deacetylase sir2A (512 aa).

A UBP-type zinc finger spans residues 7–110; that stretch reads IECIHLKDEY…EILENIKSSN (104 aa). Residues Cys-9, His-11, Cys-34, Cys-37, Cys-46, Cys-49, Cys-54, His-61, His-65, His-71, Cys-84, and Cys-87 each coordinate Zn(2+). Residues 113 to 122 show a composition bias toward basic and acidic residues; the sequence is DKIVPKKDQK. Positions 113-196 are disordered; that stretch reads DKIVPKKDQK…DESSSEGEES (84 aa). Residues 130 to 175 are compositionally biased toward low complexity; the sequence is VVPSASITTSSTTTSISKQTTVNNTTTTSSSSTTTTTTTTSTTINN. Positions 176-195 are enriched in acidic residues; sequence NEEEEESESETDESSSEGEE. Residues 231-503 enclose the Deacetylase sirtuin-type domain; sequence CVLKKPTIEE…LDLIKLLGWE (273 aa). Residue His-361 is the Proton acceptor of the active site. Cys-369, Cys-372, Cys-393, and Cys-399 together coordinate Zn(2+).

This sequence belongs to the sirtuin family. Requires Zn(2+) as cofactor.

The catalysed reaction is N(6)-acetyl-L-lysyl-[protein] + NAD(+) + H2O = 2''-O-acetyl-ADP-D-ribose + nicotinamide + L-lysyl-[protein]. Its function is as follows. NAD-dependent deacetylase, which plays an important role in the regulation of transcriptional repression. This chain is NAD-dependent deacetylase sir2A (sir2A), found in Dictyostelium discoideum (Social amoeba).